Consider the following 105-residue polypeptide: Hydrogen cyanide synthase subunit HcnA (105 aa).

The region spanning Ala-16 to Arg-97 is the 2Fe-2S ferredoxin-type domain. Cys-60, Cys-65, Cys-68, and Cys-81 together coordinate [2Fe-2S] cluster.

Heterotrimer of HcnA, HcnB and HcnC.

Its subcellular location is the cell membrane. It catalyses the reaction glycine + 2 A = hydrogen cyanide + 2 AH2 + CO2. A three-component membrane-bound flavoenzyme that catalyzes the formation of hydrogen cyanide, a secondary metabolite, by transfer of electrons to a cyanide-resistant branch of the aerobic respiratory chain. Contributes to suppression of black root rot of tobacco. This chain is Hydrogen cyanide synthase subunit HcnA, found in Pseudomonas protegens (strain DSM 19095 / LMG 27888 / CFBP 6595 / CHA0).